The chain runs to 451 residues: UPF0210 protein Cbei_2352 (451 aa).

Belongs to the UPF0210 family. In terms of assembly, homodimer.

This chain is UPF0210 protein Cbei_2352, found in Clostridium beijerinckii (strain ATCC 51743 / NCIMB 8052) (Clostridium acetobutylicum).